The following is a 289-amino-acid chain: Phosphatidylserine decarboxylase proenzyme (289 aa).

Catalysis depends on charge relay system; for autoendoproteolytic cleavage activity residues aspartate 89, histidine 146, and serine 252. Serine 252 acts as the Schiff-base intermediate with substrate; via pyruvic acid; for decarboxylase activity in catalysis. Pyruvic acid (Ser); by autocatalysis is present on serine 252.

The protein belongs to the phosphatidylserine decarboxylase family. PSD-B subfamily. Prokaryotic type I sub-subfamily. In terms of assembly, heterodimer of a large membrane-associated beta subunit and a small pyruvoyl-containing alpha subunit. Pyruvate serves as cofactor. Is synthesized initially as an inactive proenzyme. Formation of the active enzyme involves a self-maturation process in which the active site pyruvoyl group is generated from an internal serine residue via an autocatalytic post-translational modification. Two non-identical subunits are generated from the proenzyme in this reaction, and the pyruvate is formed at the N-terminus of the alpha chain, which is derived from the carboxyl end of the proenzyme. The autoendoproteolytic cleavage occurs by a canonical serine protease mechanism, in which the side chain hydroxyl group of the serine supplies its oxygen atom to form the C-terminus of the beta chain, while the remainder of the serine residue undergoes an oxidative deamination to produce ammonia and the pyruvoyl prosthetic group on the alpha chain. During this reaction, the Ser that is part of the protease active site of the proenzyme becomes the pyruvoyl prosthetic group, which constitutes an essential element of the active site of the mature decarboxylase.

It is found in the cell membrane. It carries out the reaction a 1,2-diacyl-sn-glycero-3-phospho-L-serine + H(+) = a 1,2-diacyl-sn-glycero-3-phosphoethanolamine + CO2. It participates in phospholipid metabolism; phosphatidylethanolamine biosynthesis; phosphatidylethanolamine from CDP-diacylglycerol: step 2/2. Catalyzes the formation of phosphatidylethanolamine (PtdEtn) from phosphatidylserine (PtdSer). The polypeptide is Phosphatidylserine decarboxylase proenzyme (Shewanella denitrificans (strain OS217 / ATCC BAA-1090 / DSM 15013)).